The primary structure comprises 546 residues: Chaperonin GroEL (546 aa).

Residues 29–32 (TLGP), Lys50, 86–90 (DGTTT), Gly414, 477–479 (NAL), and Asp493 contribute to the ATP site. The disordered stretch occupies residues 522–546 (KPEKDAPNPMAGMGGGGMGGMGGMM). Over residues 533 to 546 (GMGGGGMGGMGGMM) the composition is skewed to gly residues.

The protein belongs to the chaperonin (HSP60) family. Forms a cylinder of 14 subunits composed of two heptameric rings stacked back-to-back. Interacts with the co-chaperonin GroES.

The protein resides in the cytoplasm. It catalyses the reaction ATP + H2O + a folded polypeptide = ADP + phosphate + an unfolded polypeptide.. Together with its co-chaperonin GroES, plays an essential role in assisting protein folding. The GroEL-GroES system forms a nano-cage that allows encapsulation of the non-native substrate proteins and provides a physical environment optimized to promote and accelerate protein folding. The polypeptide is Chaperonin GroEL (Leptospira borgpetersenii serovar Hardjo-bovis (strain JB197)).